The sequence spans 104 residues: Type VII secretion system extracellular protein B (104 aa).

This sequence belongs to the WXG100 family. Homodimer. When mixed with EsxA does not form heterodimers.

It is found in the secreted. Functionally, virulence factor that is important for the establishment of infection in the host. EsxB is required for EsxA synthesis as well as secretion. Mediates together with EsxA the release of S.aureus from the host cell. Also inhibits host cytokine production and thus modulates dendritic cell-mediated immunity. In Staphylococcus aureus (strain MSSA476), this protein is Type VII secretion system extracellular protein B.